The chain runs to 72 residues: Translation initiation factor IF-1 (72 aa).

An S1-like domain is found at 1–72 (MAKADVIEVE…TKGRITFRFK (72 aa)).

Belongs to the IF-1 family. In terms of assembly, component of the 30S ribosomal translation pre-initiation complex which assembles on the 30S ribosome in the order IF-2 and IF-3, IF-1 and N-formylmethionyl-tRNA(fMet); mRNA recruitment can occur at any time during PIC assembly.

It is found in the cytoplasm. Its function is as follows. One of the essential components for the initiation of protein synthesis. Stabilizes the binding of IF-2 and IF-3 on the 30S subunit to which N-formylmethionyl-tRNA(fMet) subsequently binds. Helps modulate mRNA selection, yielding the 30S pre-initiation complex (PIC). Upon addition of the 50S ribosomal subunit IF-1, IF-2 and IF-3 are released leaving the mature 70S translation initiation complex. In Limosilactobacillus reuteri (strain DSM 20016) (Lactobacillus reuteri), this protein is Translation initiation factor IF-1.